The primary structure comprises 131 residues: ATP synthase epsilon chain, chloroplastic (131 aa).

It belongs to the ATPase epsilon chain family. As to quaternary structure, F-type ATPases have 2 components, CF(1) - the catalytic core - and CF(0) - the membrane proton channel. CF(1) has five subunits: alpha(3), beta(3), gamma(1), delta(1), epsilon(1). CF(0) has three main subunits: a, b and c.

The protein localises to the plastid. It localises to the chloroplast thylakoid membrane. Its function is as follows. Produces ATP from ADP in the presence of a proton gradient across the membrane. The sequence is that of ATP synthase epsilon chain, chloroplastic from Cyanidioschyzon merolae (strain NIES-3377 / 10D) (Unicellular red alga).